Here is a 212-residue protein sequence, read N- to C-terminus: Regulatory protein RecX (212 aa).

This sequence belongs to the RecX family.

It localises to the cytoplasm. In terms of biological role, modulates RecA activity. The chain is Regulatory protein RecX from Clostridioides difficile (strain 630) (Peptoclostridium difficile).